The following is a 285-amino-acid chain: Pantothenate synthetase (285 aa).

33–40 serves as a coordination point for ATP; that stretch reads MGALHEGH. The Proton donor role is filled by His40. Gln64 lines the (R)-pantoate pocket. Gln64 serves as a coordination point for beta-alanine. 150-153 contacts ATP; it reads GEKD. A (R)-pantoate-binding site is contributed by Gln156. ATP-binding positions include Ala179 and 187 to 190; that span reads LSSR.

It belongs to the pantothenate synthetase family. In terms of assembly, homodimer.

It is found in the cytoplasm. The catalysed reaction is (R)-pantoate + beta-alanine + ATP = (R)-pantothenate + AMP + diphosphate + H(+). It functions in the pathway cofactor biosynthesis; (R)-pantothenate biosynthesis; (R)-pantothenate from (R)-pantoate and beta-alanine: step 1/1. In terms of biological role, catalyzes the condensation of pantoate with beta-alanine in an ATP-dependent reaction via a pantoyl-adenylate intermediate. This Caulobacter vibrioides (strain ATCC 19089 / CIP 103742 / CB 15) (Caulobacter crescentus) protein is Pantothenate synthetase.